The primary structure comprises 164 residues: Urease subunit beta (164 aa).

Polar residues-rich tracts occupy residues 1 to 10 (MSTKTNSTKA) and 20 to 30 (TNRGTKSSAGY). The tract at residues 1 to 30 (MSTKTNSTKATSEKTDSLKTNRGTKSSAGY) is disordered.

It belongs to the urease beta subunit family. Heterotrimer of UreA (gamma), UreB (beta) and UreC (alpha) subunits. Three heterotrimers associate to form the active enzyme.

The protein resides in the cytoplasm. It carries out the reaction urea + 2 H2O + H(+) = hydrogencarbonate + 2 NH4(+). Its pathway is nitrogen metabolism; urea degradation; CO(2) and NH(3) from urea (urease route): step 1/1. Expression of the urease operon increases the likelihood of bacterial survival by contributing to acid resistance in vitro and in vivo in BALB/c mice. Y.enterocolitica enters the body via an oral path and must survive the acidic stomach before being able to colonize the intestinal mucosa. This is Urease subunit beta from Yersinia enterocolitica.